Reading from the N-terminus, the 482-residue chain is [Fructose-bisphosphate aldolase]-lysine N-methyltransferase, chloroplastic (482 aa).

A chloroplast-targeting transit peptide spans 1-57 (MSASVAVVSGFLRIPSIQKSQNPSFLFSRPKKSLVRPISASSSELPENVRNFWKWLR). The 224-residue stretch at 59-282 (QGVVSGKSVA…AGEQVYIQYD (224 aa)) folds into the SET domain. Residues 75-77 (EGL) and Arg-217 contribute to the S-adenosyl-L-methionine site. Substrate-binding residues include Arg-217, Arg-221, and Asp-234. Residue 237 to 238 (NH) coordinates S-adenosyl-L-methionine. 3 residues coordinate substrate: Tyr-249, Tyr-281, and Tyr-294.

The protein belongs to the class V-like SAM-binding methyltransferase superfamily. Plant protein-lysine LSMT methyltransferase family.

Its subcellular location is the plastid. The protein localises to the chloroplast stroma. The catalysed reaction is [fructose-bisphosphate aldolase]-L-lysine + 3 S-adenosyl-L-methionine = [fructose-bisphosphate aldolase]-N(6),N(6),N(6)-trimethyl-L-lysine + 3 S-adenosyl-L-homocysteine + 3 H(+). Protein-lysine methyltransferase methylating chloroplastic fructose 1,6-bisphosphate aldolases. Can also use with low efficiency gamma-tocopherol methyltransferase as substrate, but not a cytosolic aldolase. Able to interact with unmethylated Rubisco, but unlike in pea, the complex is catalytically unproductive. This is [Fructose-bisphosphate aldolase]-lysine N-methyltransferase, chloroplastic (LSMT-L) from Arabidopsis thaliana (Mouse-ear cress).